Here is a 205-residue protein sequence, read N- to C-terminus: Ribosomal RNA small subunit methyltransferase G (205 aa).

Residues Gly-71, Phe-76, 120-121, and Arg-134 contribute to the S-adenosyl-L-methionine site; that span reads IE.

This sequence belongs to the methyltransferase superfamily. RNA methyltransferase RsmG family.

Its subcellular location is the cytoplasm. It catalyses the reaction guanosine(527) in 16S rRNA + S-adenosyl-L-methionine = N(7)-methylguanosine(527) in 16S rRNA + S-adenosyl-L-homocysteine. In terms of biological role, specifically methylates the N7 position of guanine in position 527 of 16S rRNA. The polypeptide is Ribosomal RNA small subunit methyltransferase G (Paramagnetospirillum magneticum (strain ATCC 700264 / AMB-1) (Magnetospirillum magneticum)).